A 337-amino-acid polypeptide reads, in one-letter code: Thiazole synthase (337 aa).

The disordered stretch occupies residues Met-1 to Ala-41. Over residues Gly-10 to Gly-25 the composition is skewed to low complexity. Gly residues predominate over residues Leu-26–Ala-41. The Schiff-base intermediate with DXP role is filled by Lys-144. 1-deoxy-D-xylulose 5-phosphate-binding positions include Gly-205, Ala-231 to Gly-232, and Asn-253 to Thr-254. The interval Phe-302–Arg-337 is disordered. Over residues Val-319–Arg-337 the composition is skewed to low complexity.

This sequence belongs to the ThiG family. Homotetramer. Forms heterodimers with either ThiH or ThiS.

The protein localises to the cytoplasm. The catalysed reaction is [ThiS sulfur-carrier protein]-C-terminal-Gly-aminoethanethioate + 2-iminoacetate + 1-deoxy-D-xylulose 5-phosphate = [ThiS sulfur-carrier protein]-C-terminal Gly-Gly + 2-[(2R,5Z)-2-carboxy-4-methylthiazol-5(2H)-ylidene]ethyl phosphate + 2 H2O + H(+). It functions in the pathway cofactor biosynthesis; thiamine diphosphate biosynthesis. Its function is as follows. Catalyzes the rearrangement of 1-deoxy-D-xylulose 5-phosphate (DXP) to produce the thiazole phosphate moiety of thiamine. Sulfur is provided by the thiocarboxylate moiety of the carrier protein ThiS. In vitro, sulfur can be provided by H(2)S. The sequence is that of Thiazole synthase from Frankia casuarinae (strain DSM 45818 / CECT 9043 / HFP020203 / CcI3).